The chain runs to 136 residues: Large ribosomal subunit protein uL16 (136 aa).

It belongs to the universal ribosomal protein uL16 family. In terms of assembly, part of the 50S ribosomal subunit.

Its function is as follows. Binds 23S rRNA and is also seen to make contacts with the A and possibly P site tRNAs. The protein is Large ribosomal subunit protein uL16 of Ehrlichia canis (strain Jake).